An 870-amino-acid polypeptide reads, in one-letter code: Dynamin-2 (870 aa).

In terms of domain architecture, Dynamin-type G spans 28-294; sequence HLDLPQIAVV…LTNHIRESLP (267 aa). The tract at residues 38 to 45 is G1 motif; it reads GGQSAGKS. Ser-41, Gly-43, Lys-44, Ser-45, Ser-46, Arg-59, and Gly-60 together coordinate GDP. A G2 motif region spans residues 64 to 66; that stretch reads VTR. The G3 motif stretch occupies residues 136–139; it reads DLPG. The segment at 205–208 is G4 motif; it reads TKLD. Lys-206, Asp-208, and Asp-211 together coordinate GDP. Tyr-231 carries the post-translational modification Phosphotyrosine. The segment at 235-238 is G5 motif; sequence VNRS. GDP is bound by residues Asn-236, Arg-237, and Gln-239. Residue Lys-299 is modified to N6-acetyllysine. Residues 519–625 enclose the PH domain; sequence LVIRRGWLTI…WKASFLRAGV (107 aa). The residue at position 597 (Tyr-597) is a Phosphotyrosine. Lys-598 carries the post-translational modification N6-acetyllysine. Residues 653–744 enclose the GED domain; it reads VETIRNLVDS…IIGDISTSTV (92 aa). Residues 741 to 870 form a disordered region; that stretch reads TSTVSTPVPP…IRPAEPSLLD (130 aa). At Thr-755 the chain carries Phosphothreonine. Polar residues predominate over residues 756–767; the sequence is WLQNTSGHSPTP. The residue at position 764 (Ser-764) is a Phosphoserine; by CDK1. Pro residues predominate over residues 826 to 846; sequence SAPPQIPSRPARIPPGIPPGV. Residues 847–864 are compositionally biased toward low complexity; it reads PSRRAPAAPSRPTIIRPA.

It belongs to the TRAFAC class dynamin-like GTPase superfamily. Dynamin/Fzo/YdjA family. Oligomerizes into a helical polymer that self-assembles around the vesicle membrane, when associated to the menbrane through lipid binding. Interacts with SHANK1 and SHANK2. Interacts with SNX9. Interacts (via C-terminal proline-rich domain (PRD)) with SNX18 (via SH3 domain); this interaction regulates ATG9A and ATG16L1 trafficking from recycling endosomes to sites of autophagosome formation. Interacts with SNX33 (via SH3 domain). Interacts with MYO1E (via SH3 domain). Interacts with PSTPIP1 (via SH3 domain). Interacts with CTNND2. Interacts (via C-terminal proline-rich domain (PRD)) with BIN1 (via SH3 domain); this interaction allows the recruitment of DNM2 to the membrane tubules and inhibits self-assembly-stimulated GTPase activity on the membrane. Interacts with GABARAP, GABARAPL1 and GABARAPL2. Interacts with MAP1LC3B (the lipidate and non-lipidated LC3 form); this interaction mediates recycling endosome scission leading to autophagosome release. Interacts with ITSN1. Interacts (via C-terminal proline-rich domain (PRD)) with SH3BP4 (via SH3 domain); this interaction controls the GTPase activity and is prevented by EGFR-induced tyrosine phosphorylation of either DNM2 or SH3BP4. Interacts with MYOF. May interact with PIK3C3. May be a component of a complex composed of RAB5A (in GDP-bound form), DYN2 and PIK3C3. Interacts with SDC4; this interaction is markedly enhanced at focal ahesion site upon induction of focal adhesions and stress-fiber formation. Interacts with ACTN1. Interacts with CTTN; this interaction stimulates the intrinsic GTPase activity of DNM2 and stabilizes the association of DNM2 and actin filaments; in addition this interaction is stimulated by ligand binding to the receptor, leading to the recruitment of the DNM2-CTTN complex to the sequestered receptor-ligand complex to its internalization. Interacts with NOSTRIN (via SH3 domain); this interaction allows the recruitment of NOS3 to dynamin-positive structures. Interacts with TUBG1; this interaction may participate in centrosome cohesion. Phosphorylation at Ser-848 by GSK3-alpha relieves the inhibition of BIN1 and promotes endocytosis. Phosphorylation at Ser-764 by CDK1 is greatly increased upon mitotic entry. It regulates cytokinesis downstream of calcineurin, and does not affect clathrin-mediated endocytosis. Dephosphorylated by calcineurin/PP2 during cytokinesis in a Ca(2+)- and calmodulin-dependent manner. Phosphorylated on tyrosine residues by EGFR. Phosphorylated on tyrosine residues after activation of SRC. In terms of tissue distribution, expressed in most tissues during embryonic development, including the peripheral nervous system although no expression is evident in skeletal muscle or heart.

The protein resides in the cytoplasm. Its subcellular location is the cytoskeleton. It is found in the cytoplasmic vesicle. The protein localises to the clathrin-coated vesicle. It localises to the cell projection. The protein resides in the uropodium. Its subcellular location is the endosome. It is found in the microtubule organizing center. The protein localises to the centrosome. It localises to the centriole. The protein resides in the recycling endosome. Its subcellular location is the phagocytic cup. It is found in the phagosome membrane. The protein localises to the podosome. It localises to the cell junction. The protein resides in the postsynaptic density. Its subcellular location is the synapse. It is found in the synaptosome. The protein localises to the midbody. It localises to the membrane. The protein resides in the clathrin-coated pit. The catalysed reaction is GTP + H2O = GDP + phosphate + H(+). Its function is as follows. Catalyzes the hydrolysis of GTP and utilizes this energy to mediate vesicle scission at plasma membrane during endocytosis and filament remodeling at many actin structures during organization of the actin cytoskeleton. Plays an important role in vesicular trafficking processes, namely clathrin-mediated endocytosis (CME), exocytic and clathrin-coated vesicle from the trans-Golgi network, and PDGF stimulated macropinocytosis. During vesicular trafficking process, associates to the membrane, through lipid binding, and self-assembles into ring-like structure through oligomerization to form a helical polymer around the vesicle membrane and leading to vesicle scission. Plays a role in organization of the actin cytoskeleton by mediating arrangement of stress fibers and actin bundles in podocytes. During organization of the actin cytoskeleton, self-assembles into ring-like structure that directly bundles actin filaments to form typical membrane tubules decorated with dynamin spiral polymers. Self-assembly increases GTPase activity and the GTP hydrolysis causes the rapid depolymerization of dynamin spiral polymers, and results in dispersion of actin bundles. Remodels, through its interaction with CTTN, bundled actin filaments in a GTPase-dependent manner and plays a role in orchestrating the global actomyosin cytoskeleton. The interaction with CTTN stabilizes the interaction of DNM2 and actin filaments and stimulates the intrinsic GTPase activity that results in actin filament-barbed ends and increases the sensitivity of filaments in bundles to the actin depolymerizing factor, CFL1. Plays a role in the autophagy process, by participating in the formation of ATG9A vesicles destined for the autophagosomes through its interaction with SNX18, by mediating recycling endosome scission leading to autophagosome release through MAP1LC3B interaction. Also regulates maturation of apoptotic cell corpse-containing phagosomes by recruiting PIK3C3 to the phagosome membrane. Also plays a role in cytokinesis. May participate in centrosome cohesion through its interaction with TUBG1. Plays a role in the regulation of neuron morphology, axon growth and formation of neuronal growth cones. Involved in membrane tubulation. This Mus musculus (Mouse) protein is Dynamin-2.